Reading from the N-terminus, the 671-residue chain is DNA ligase (671 aa).

NAD(+) is bound by residues 32–36, 81–82, and Glu-113; these read DAEYD and SL. Lys-115 acts as the N6-AMP-lysine intermediate in catalysis. NAD(+) contacts are provided by Arg-136, Glu-173, Lys-290, and Lys-314. Zn(2+) contacts are provided by Cys-408, Cys-411, Cys-426, and Cys-432. The BRCT domain occupies 593–671; that stretch reads EIDSPFAGKT…ETEMLRLLGS (79 aa).

It belongs to the NAD-dependent DNA ligase family. LigA subfamily. The cofactor is Mg(2+). Requires Mn(2+) as cofactor.

It carries out the reaction NAD(+) + (deoxyribonucleotide)n-3'-hydroxyl + 5'-phospho-(deoxyribonucleotide)m = (deoxyribonucleotide)n+m + AMP + beta-nicotinamide D-nucleotide.. Functionally, DNA ligase that catalyzes the formation of phosphodiester linkages between 5'-phosphoryl and 3'-hydroxyl groups in double-stranded DNA using NAD as a coenzyme and as the energy source for the reaction. It is essential for DNA replication and repair of damaged DNA. This chain is DNA ligase, found in Escherichia coli O81 (strain ED1a).